The sequence spans 49 residues: Large ribosomal subunit protein eL40 (49 aa).

This sequence belongs to the eukaryotic ribosomal protein eL40 family.

The chain is Large ribosomal subunit protein eL40 from Archaeoglobus fulgidus (strain ATCC 49558 / DSM 4304 / JCM 9628 / NBRC 100126 / VC-16).